The chain runs to 659 residues: UvrABC system protein B (659 aa).

The Helicase ATP-binding domain occupies 25-182 (QSIENGNRGQ…KKLIEIQYER (158 aa)). Position 38 to 45 (38 to 45 (GVTGSGKT)) interacts with ATP. Positions 91 to 114 (YYDYYQPEAYVPQTDTFIEKDASI) match the Beta-hairpin motif. A Helicase C-terminal domain is found at 429-582 (QIDDLYGEIQ…QMEYNEEHNI (154 aa)). A UVR domain is found at 622-657 (EKLIEQYEEEMKEAAKNLQFERAAELRDIIKDLKEN).

Belongs to the UvrB family. As to quaternary structure, forms a heterotetramer with UvrA during the search for lesions. Interacts with UvrC in an incision complex.

Its subcellular location is the cytoplasm. The UvrABC repair system catalyzes the recognition and processing of DNA lesions. A damage recognition complex composed of 2 UvrA and 2 UvrB subunits scans DNA for abnormalities. Upon binding of the UvrA(2)B(2) complex to a putative damaged site, the DNA wraps around one UvrB monomer. DNA wrap is dependent on ATP binding by UvrB and probably causes local melting of the DNA helix, facilitating insertion of UvrB beta-hairpin between the DNA strands. Then UvrB probes one DNA strand for the presence of a lesion. If a lesion is found the UvrA subunits dissociate and the UvrB-DNA preincision complex is formed. This complex is subsequently bound by UvrC and the second UvrB is released. If no lesion is found, the DNA wraps around the other UvrB subunit that will check the other stand for damage. The protein is UvrABC system protein B of Clostridium perfringens (strain SM101 / Type A).